Reading from the N-terminus, the 238-residue chain is Probable transcriptional regulatory protein llmg_0242 (238 aa).

Belongs to the TACO1 family. YeeN subfamily.

Its subcellular location is the cytoplasm. The protein is Probable transcriptional regulatory protein llmg_0242 of Lactococcus lactis subsp. cremoris (strain MG1363).